The sequence spans 306 residues: tRNA dimethylallyltransferase (306 aa).

14–21 (GPTAAGKS) lines the ATP pocket. 16 to 21 (TAAGKS) is a binding site for substrate. The interaction with substrate tRNA stretch occupies residues 39 to 42 (DSRL).

The protein belongs to the IPP transferase family. Monomer. Requires Mg(2+) as cofactor.

It carries out the reaction adenosine(37) in tRNA + dimethylallyl diphosphate = N(6)-dimethylallyladenosine(37) in tRNA + diphosphate. Catalyzes the transfer of a dimethylallyl group onto the adenine at position 37 in tRNAs that read codons beginning with uridine, leading to the formation of N6-(dimethylallyl)adenosine (i(6)A). The chain is tRNA dimethylallyltransferase from Synechococcus elongatus (strain ATCC 33912 / PCC 7942 / FACHB-805) (Anacystis nidulans R2).